We begin with the raw amino-acid sequence, 164 residues long: UPF0114 protein YqhA (164 aa).

Helical transmembrane passes span L15–F35, L53–V73, and L136–L156.

The protein belongs to the UPF0114 family.

Its subcellular location is the cell membrane. The sequence is that of UPF0114 protein YqhA from Escherichia coli O6:H1 (strain CFT073 / ATCC 700928 / UPEC).